A 1092-amino-acid polypeptide reads, in one-letter code: DNA polymerase delta catalytic subunit (1092 aa).

A disordered region spans residues 1-71; sequence MDGKRKFNGT…SRPPPPELDP (71 aa). The Nuclear localization signal signature appears at 4–19; sequence KRKFNGTSNGHAKKPR. Zn(2+) contacts are provided by C997, C1000, C1014, and C1017. The segment at 997–1017 adopts a CysA-type zinc-finger fold; that stretch reads CLGCKSLMPKGYEQACLCPHC. Positions 1046, 1049, 1059, and 1064 each coordinate [4Fe-4S] cluster. Residues 1046–1064 carry the CysB motif motif; sequence CQRCQESLHEEVICSNRDC.

The protein belongs to the DNA polymerase type-B family. As to quaternary structure, catalytic component of the DNA polymerase delta complex consisting of three subunits: the catalytic subunit PolD1 and two accessory subunits PolD2/Pol31 and PolD3/Pol32. Within the delta complex, interacts with both PolD2 and PolD3, and is able to interact with PolD2 in the absence of PolD3. Interacts with PCNA and PCNA2. [4Fe-4S] cluster is required as a cofactor. It depends on Mg(2+) as a cofactor. Expressed in ovaries (at the protein level). Expressed in embryos (at the protein level).

Its subcellular location is the nucleus. It is found in the nucleoplasm. The enzyme catalyses DNA(n) + a 2'-deoxyribonucleoside 5'-triphosphate = DNA(n+1) + diphosphate. Inhibited by KCL. Also inhibited by carbonyldiphosphonate, aphidicolin and N-ethylmaleimide (NEM). Its function is as follows. As the catalytic component of the DNA polymerase delta complex, plays a crucial role in high fidelity genome replication, including lagging strand synthesis, DNA recombination and repair. Exhibits both DNA polymerase and 3'- to 5'-exonuclease activities. Required at the nucleus of rapidly dividing embryonic cells to activate genome replication during the earliest cell cycles. Likely to require the presence of accessory proteins PolD2 and PolD3 for full activity. The protein is DNA polymerase delta catalytic subunit of Drosophila melanogaster (Fruit fly).